An 85-amino-acid chain; its full sequence is Large ribosomal subunit protein bL27 (85 aa).

The disordered stretch occupies residues 1–22 (MAHKKAGGSTNNGRDSESKRLG).

This sequence belongs to the bacterial ribosomal protein bL27 family.

This Photobacterium profundum (strain SS9) protein is Large ribosomal subunit protein bL27.